Here is a 549-residue protein sequence, read N- to C-terminus: YTH domain-containing family protein 1 (549 aa).

Disordered stretches follow at residues 29 to 102 (QAPW…QPNM), 139 to 165 (GHPPHQAPVDSQSNVVRGPPRKPRQSG), 243 to 262 (GASGITAPTGPSATTPQQAV), 273 to 298 (DSTETQSDNADTDTPTAVGTPDAKGP), and 425 to 458 (REDSSEGVTQEEPAPAVAEQDDTTGGLDGNSENK). Over residues 49–61 (VVGQTQSSPQYNG) the composition is skewed to polar residues. Residues 71–102 (QGYYMPQQQQQQQQMPQYYGGPMSPSQPQPNM) show a composition bias toward low complexity. Polar residues-rich tracts occupy residues 251 to 260 (TGPSATTPQQ) and 273 to 289 (DSTETQSDNADTDTPTA). Residues 307–513 (DRFFVLKSLT…SVGRRLIGLF (207 aa)) enclose the YTH domain.

Belongs to the YTHDF family. YTHDF1 subfamily.

In terms of biological role, specifically recognizes and binds N6-methyladenosine (m6A)-containing mRNAs, and regulates their stability. M6A is a modification present at internal sites of mRNAs and some non-coding RNAs and plays a role in mRNA stability and processing. Directly interacts with the acid phosphatase APHA mRNA to increase its stability. The polypeptide is YTH domain-containing family protein 1 (Cryphonectria parasitica (strain ATCC 38755 / EP155)).